The chain runs to 176 residues: 3-hydroxydecanoyl-[acyl-carrier-protein] dehydratase (176 aa).

His-71 is an active-site residue.

The protein belongs to the thioester dehydratase family. FabA subfamily. In terms of assembly, homodimer.

The protein localises to the cytoplasm. It catalyses the reaction a (3R)-hydroxyacyl-[ACP] = a (2E)-enoyl-[ACP] + H2O. The catalysed reaction is (3R)-hydroxydecanoyl-[ACP] = (2E)-decenoyl-[ACP] + H2O. It carries out the reaction (2E)-decenoyl-[ACP] = (3Z)-decenoyl-[ACP]. It participates in lipid metabolism; fatty acid biosynthesis. In terms of biological role, necessary for the introduction of cis unsaturation into fatty acids. Catalyzes the dehydration of (3R)-3-hydroxydecanoyl-ACP to E-(2)-decenoyl-ACP and then its isomerization to Z-(3)-decenoyl-ACP. Can catalyze the dehydratase reaction for beta-hydroxyacyl-ACPs with saturated chain lengths up to 16:0, being most active on intermediate chain length. In Afipia carboxidovorans (strain ATCC 49405 / DSM 1227 / KCTC 32145 / OM5) (Oligotropha carboxidovorans), this protein is 3-hydroxydecanoyl-[acyl-carrier-protein] dehydratase.